The following is a 707-amino-acid chain: Choline transporter-like protein 4 (707 aa).

Residues 1–32 (MGRKQNENEAHGNSAKYDPSFRGPIKNRGCTD) are Cytoplasmic-facing. The helical transmembrane segment at 33–53 (IICCVLFLIFILGYIIVGLVA) threads the bilayer. The Extracellular portion of the chain corresponds to 54–227 (WVYGDPRQVL…KIFEDFAQSW (174 aa)). Asn-67, Asn-185, Asn-195, and Asn-196 each carry an N-linked (GlcNAc...) asparagine glycan. A helical membrane pass occupies residues 228–248 (YWILVALGVALALSLLFILLL). The Cytoplasmic portion of the chain corresponds to 249 to 250 (RL). Residues 251 to 271 (VAAPLVLLLIVGVLAVLAYGI) form a helical membrane-spanning segment. At 272–307 (YHCWQQYQVFRDKGASITQLGFTTNFSAYQSVKETW) the chain is on the extracellular side. Residue Asn-296 is glycosylated (N-linked (GlcNAc...) asparagine). Residues 308–328 (LAALIVLAVLEGILLLMLIFL) form a helical membrane-spanning segment. Over 329–356 (RQRIRIAIALLKEASRAVGQMMSTMFYP) the chain is Cytoplasmic. The chain crosses the membrane as a helical span at residues 357–377 (LVTFVLLVICIGYWAVTALYL). Residues 378-452 (ATSGQPQYIY…GVLGLFWTVN (75 aa)) are Extracellular-facing. N-linked (GlcNAc...) asparagine glycosylation is found at Asn-391, Asn-403, and Asn-413. A helical membrane pass occupies residues 453-473 (WVLALGQCVLAGAFASFYWAF). Topologically, residues 474 to 498 (HKPRDIPTFPLSSAFIRTLRYHTGS) are cytoplasmic. The helical transmembrane segment at 499–519 (LAFGALILSLVQIARVILEYI) threads the bilayer. Topologically, residues 520-557 (DHKLRGSQNPVARCIICCFKCCLWCLEKFIKFLNRNAY) are extracellular. A helical transmembrane segment spans residues 558–578 (IMIAIYGKNFCVSAKNAFMLL). Topologically, residues 579 to 594 (MRNVLRVVVLDKVTDL) are cytoplasmic. The chain crosses the membrane as a helical span at residues 595–615 (LLFFGKLLVVGGVGVLSFFFF). At 616 to 635 (SGRIKGLGKDFENPNLNYYW) the chain is on the extracellular side. A helical membrane pass occupies residues 636-656 (LPIMTSIMGAYVIASGFFSVF). Residues 657 to 707 (GMCVDTLFLCFLEDLERNDGSQERPYYMPKALLKILGKKNEAPTGGKTRKK) lie on the Cytoplasmic side of the membrane.

This sequence belongs to the CTL (choline transporter-like) family. In terms of processing, N-glycosylated; N-glycosylation of Asn-67 and Asn-391 is required for a proper thiamine pyrophosphate uptake. In terms of tissue distribution, expressed in colon and cecum.

The protein localises to the membrane. Its subcellular location is the apical cell membrane. The enzyme catalyses choline(out) + n H(+)(in) = choline(in) + n H(+)(out). The catalysed reaction is thiamine diphosphate(out) = thiamine diphosphate(in). Functionally, choline transporter that plays a role in the choline-acetylcholine system and is required to the efferent innervation of hair cells in the olivocochlear bundle for the maintenance of physiological function of outer hair cells and the protection of hair cells from acoustic injury. Also described as a thiamine pyrophosphate transporter in colon, may mediate the absorption of microbiota-generated thiamine pyrophosphate and contribute to host thiamine (vitamin B1) homeostasis. The protein is Choline transporter-like protein 4 of Mus musculus (Mouse).